The sequence spans 343 residues: MTITPQEALQRTIEHREIFHDEMLHLMRLIMRGDLSPVMAAAIITGLRVKKETIGEIAAAATVMREFANHVEVQDNSNFVDIVGTGGDGSHTFNISTASMFVTAAAGAKVAKHGNRGVSSKSGSADVLEALGVNIDLQSDQVAASIAETGMGFMFAPNHHPAMKNIAAVRRELGVRTIFNILGPLTNPAGAPNQLMGVFHPDLVGIQVRVMQRLGAQHVLVVYGKDGMDEVSLGAATLVGELRDGKVHEYEIHPEDFGLQMVSNRTLKVENADESRTMLLGALDNQPGVAREIVTLNAGTALYAANIAESIADGIQLAREAIASGKARAKVDELVRFTQQFKR.

5-phospho-alpha-D-ribose 1-diphosphate-binding positions include glycine 84, glycine 87–aspartate 88, threonine 92, asparagine 94–threonine 97, lysine 112–serine 120, and serine 124. Residue glycine 84 coordinates anthranilate. Serine 96 is a binding site for Mg(2+). Asparagine 115 contributes to the anthranilate binding site. Residue arginine 170 participates in anthranilate binding. Aspartate 229 and glutamate 230 together coordinate Mg(2+).

The protein belongs to the anthranilate phosphoribosyltransferase family. As to quaternary structure, homodimer. Requires Mg(2+) as cofactor.

The enzyme catalyses N-(5-phospho-beta-D-ribosyl)anthranilate + diphosphate = 5-phospho-alpha-D-ribose 1-diphosphate + anthranilate. The protein operates within amino-acid biosynthesis; L-tryptophan biosynthesis; L-tryptophan from chorismate: step 2/5. Catalyzes the transfer of the phosphoribosyl group of 5-phosphorylribose-1-pyrophosphate (PRPP) to anthranilate to yield N-(5'-phosphoribosyl)-anthranilate (PRA). In Burkholderia orbicola (strain MC0-3), this protein is Anthranilate phosphoribosyltransferase.